The following is a 503-amino-acid chain: Glucose-6-phosphate 1-dehydrogenase (503 aa).

Residues Gly14–Lys21, Arg49, and Lys158 contribute to the NADP(+) site. Residues Lys158, His188 to Lys192, Glu226, and Asp245 contribute to the D-glucose 6-phosphate site. His250 functions as the Proton acceptor in the catalytic mechanism. Lys341 contributes to the NADP(+) binding site. Lys344 is a binding site for D-glucose 6-phosphate. NADP(+) is bound by residues Lys350, Arg354, and Arg376. D-glucose 6-phosphate is bound at residue Gln378. NADP(+) is bound by residues Tyr384–Lys386, Arg471, and Tyr487.

Belongs to the glucose-6-phosphate dehydrogenase family.

The catalysed reaction is D-glucose 6-phosphate + NADP(+) = 6-phospho-D-glucono-1,5-lactone + NADPH + H(+). It functions in the pathway carbohydrate degradation; pentose phosphate pathway; D-ribulose 5-phosphate from D-glucose 6-phosphate (oxidative stage): step 1/3. Its function is as follows. Catalyzes the rate-limiting step of the oxidative pentose-phosphate pathway, which represents a route for the dissimilation of carbohydrates besides glycolysis. The main function of this enzyme is to provide reducing power (NADPH) and pentose phosphates for fatty acid and nucleic acid synthesis. The G6PDH activity is required to cope with hydrogen peroxide and potassium bisulfite stresses and plays a role in adaptation to conditions used in wine fermentations. The chain is Glucose-6-phosphate 1-dehydrogenase from Hanseniaspora uvarum (Yeast).